We begin with the raw amino-acid sequence, 85 residues long: F1845 adhesin operon regulatory protein (85 aa).

Its function is as follows. Regulates the transcription of genes involved in the biosynthesis of F1845 fimbrial adhesin. The sequence is that of F1845 adhesin operon regulatory protein (daaA) from Escherichia coli.